A 390-amino-acid chain; its full sequence is Chorismate synthase 2 (390 aa).

NADP(+) is bound by residues R39 and R45. FMN contacts are provided by residues 132-134, 253-254, G298, 313-317, and R339; these read RSS, NA, and KPIPT.

This sequence belongs to the chorismate synthase family. As to quaternary structure, homotetramer. FMNH2 is required as a cofactor.

It catalyses the reaction 5-O-(1-carboxyvinyl)-3-phosphoshikimate = chorismate + phosphate. Its pathway is metabolic intermediate biosynthesis; chorismate biosynthesis; chorismate from D-erythrose 4-phosphate and phosphoenolpyruvate: step 7/7. Its function is as follows. Catalyzes the anti-1,4-elimination of the C-3 phosphate and the C-6 proR hydrogen from 5-enolpyruvylshikimate-3-phosphate (EPSP) to yield chorismate, which is the branch point compound that serves as the starting substrate for the three terminal pathways of aromatic amino acid biosynthesis. This reaction introduces a second double bond into the aromatic ring system. The polypeptide is Chorismate synthase 2 (Bacillus cereus (strain ATCC 10987 / NRS 248)).